The chain runs to 428 residues: D-amino acid dehydrogenase (428 aa).

FAD is bound at residue 3-17 (VVVLGSGVVGVASAY).

This sequence belongs to the DadA oxidoreductase family. Requires FAD as cofactor.

It catalyses the reaction a D-alpha-amino acid + A + H2O = a 2-oxocarboxylate + AH2 + NH4(+). The protein operates within amino-acid degradation; D-alanine degradation; NH(3) and pyruvate from D-alanine: step 1/1. Functionally, oxidative deamination of D-amino acids. In Burkholderia ambifaria (strain MC40-6), this protein is D-amino acid dehydrogenase.